We begin with the raw amino-acid sequence, 259 residues long: Cobalt transport protein CbiM (259 aa).

The signal sequence occupies residues 1–25 (MFRRTTWLTLYLLLAMAALARPAFA). 6 helical membrane passes run 31–51 (GFLP…FWIW), 68–88 (MLLG…LPSV), 100–120 (LGAV…VLLF), 132–152 (TLGA…YGLY), 160–180 (GSMP…TYVT), and 206–226 (IFAV…VIVF).

Belongs to the CbiM family. Forms an energy-coupling factor (ECF) transporter complex composed of an ATP-binding protein (A component, CbiO), a transmembrane protein (T component, CbiQ) and 2 possible substrate-capture proteins (S components, CbiM and CbiN) of unknown stoichimetry.

It localises to the cell membrane. Its pathway is cofactor biosynthesis; adenosylcobalamin biosynthesis. Its function is as follows. Part of the energy-coupling factor (ECF) transporter complex CbiMNOQ involved in cobalt import. The chain is Cobalt transport protein CbiM from Moorella thermoacetica (strain ATCC 39073 / JCM 9320).